The chain runs to 215 residues: Small ribosomal subunit protein uS7 (215 aa).

It belongs to the universal ribosomal protein uS7 family. In terms of assembly, part of the 30S ribosomal subunit.

Functionally, one of the primary rRNA binding proteins, it binds directly to 16S rRNA where it nucleates assembly of the head domain of the 30S subunit. Is located at the subunit interface close to the decoding center. The protein is Small ribosomal subunit protein uS7 of Pyrococcus furiosus (strain ATCC 43587 / DSM 3638 / JCM 8422 / Vc1).